The primary structure comprises 1002 residues: Golgin subfamily A member 2 (1002 aa).

Residues 1 to 11 (MWPQPRLPPRP) show a composition bias toward pro residues. The interval 1–84 (MWPQPRLPPR…AATLQPSDDT (84 aa)) is interaction with p115/USO1. The disordered stretch occupies residues 1-107 (MWPQPRLPPR…TSMAASQNHD (107 aa)). The stretch at 16–892 (ETRQSKLAAA…LELQELVLRL (877 aa)) forms a coiled coil. Arg-18, Arg-30, and Arg-35 each carry dimethylated arginine. The short motif at 26–49 (KKKLREYQQRNSPGVPTGAKKKKK) is the Nuclear localization signal element. A Phosphoserine modification is found at Ser-37. The span at 52 to 63 (NGSNPETTTSGG) shows a compositional bias: polar residues. The residue at position 66 (Ser-66) is a Phosphoserine. Polar residues predominate over residues 95–105 (ASLTSMAASQN). A phosphoserine mark is found at Ser-273, Ser-438, and Ser-690. The tract at residues 694 to 724 (HPGEGDGLDREEEEDEEEEEEEAVAVPQPMP) is disordered. The span at 702–716 (DREEEEDEEEEEEEA) shows a compositional bias: acidic residues. Phosphoserine occurs at positions 937, 953, and 981. Residues 992 to 1002 (DENDEVKITVI) form an interaction with GORASP1/GRASP65 region.

Belongs to the GOLGA2 family. As to quaternary structure, homodimer, may assemble into homohexamers. Homotetramer; forms a parallel homotetramer with a flexible rod-like structure that can give rise to I- and Y-shaped conformations. Interacts with GORASP1/GRASP65. The homooligomer forms a complex with GORASP1 with a 1:1 stoichiometry. Interacts with RAB1B that has been activated by GTP-binding. Interacts with p115/USO1; interaction with p115/USO1 inhibits interaction with STX5 and/or RAB1B. Interacts with STX5. Interacts with ZFPL1. Interacts with AKAP450/AKAP9; leading to recruit AKAP450/AKAP9 to the cis-Golgi. Cleaved by caspases at the onset of apoptosis. In terms of processing, methylation by PRMT5 is required for Golgi ribbon formation. While dimethylation at Arg-30 and Arg-35 are confirmed in vivo, it is unclear whether Arg-18 is methylated in vivo. Post-translationally, phosphorylated at Ser-37 by CDK1 at the onset of mitosis, inhibiting the interaction with p115/USO1 and triggering Golgi disassembly. Phosphorylated at Ser-37 in prophase as the Golgi complex starts to break down, and remains phosphorylated during further breakdown and partitioning of the Golgi fragments in metaphase and anaphase. In telophase, GM130 is dephosphorylated by PP2A as the Golgi fragments start to reassemble.

It localises to the golgi apparatus. The protein resides in the cis-Golgi network membrane. The protein localises to the endoplasmic reticulum-Golgi intermediate compartment membrane. It is found in the cytoplasm. Its subcellular location is the cytoskeleton. It localises to the spindle pole. Its function is as follows. Peripheral membrane component of the cis-Golgi stack that acts as a membrane skeleton that maintains the structure of the Golgi apparatus, and as a vesicle thether that facilitates vesicle fusion to the Golgi membrane. Required for normal protein transport from the endoplasmic reticulum to the Golgi apparatus and the cell membrane. Together with p115/USO1 and STX5, involved in vesicle tethering and fusion at the cis-Golgi membrane to maintain the stacked and inter-connected structure of the Golgi apparatus. Plays a central role in mitotic Golgi disassembly: phosphorylation at Ser-37 by CDK1 at the onset of mitosis inhibits the interaction with p115/USO1, preventing tethering of COPI vesicles and thereby inhibiting transport through the Golgi apparatus during mitosis. Also plays a key role in spindle pole assembly and centrosome organization. Promotes the mitotic spindle pole assembly by activating the spindle assembly factor TPX2 to nucleate microtubules around the Golgi and capture them to couple mitotic membranes to the spindle: upon phosphorylation at the onset of mitosis, GOLGA2 interacts with importin-alpha via the nuclear localization signal region, leading to recruit importin-alpha to the Golgi membranes and liberate the spindle assembly factor TPX2 from importin-alpha. TPX2 then activates AURKA kinase and stimulates local microtubule nucleation. Upon filament assembly, nascent microtubules are further captured by GOLGA2, thus linking Golgi membranes to the spindle. Regulates the meiotic spindle pole assembly, probably via the same mechanism. Also regulates the centrosome organization. Also required for the Golgi ribbon formation and glycosylation of membrane and secretory proteins. This Homo sapiens (Human) protein is Golgin subfamily A member 2 (GOLGA2).